The chain runs to 230 residues: Ribonuclease HII (230 aa).

An RNase H type-2 domain is found at 21–212 (GPVAGVDEVG…VRRVANGSGG (192 aa)). D27, E28, and D121 together coordinate a divalent metal cation.

Belongs to the RNase HII family. Mn(2+) serves as cofactor. Mg(2+) is required as a cofactor.

It localises to the cytoplasm. The enzyme catalyses Endonucleolytic cleavage to 5'-phosphomonoester.. Endonuclease that specifically degrades the RNA of RNA-DNA hybrids. The polypeptide is Ribonuclease HII (Mycobacterium avium (strain 104)).